Here is a 444-residue protein sequence, read N- to C-terminus: Phosphoglucosamine mutase (444 aa).

Residue Ser-102 is the Phosphoserine intermediate of the active site. Mg(2+) is bound by residues Ser-102, Asp-241, Asp-243, and Asp-245. Position 102 is a phosphoserine (Ser-102).

It belongs to the phosphohexose mutase family. Mg(2+) is required as a cofactor. Post-translationally, activated by phosphorylation.

It carries out the reaction alpha-D-glucosamine 1-phosphate = D-glucosamine 6-phosphate. In terms of biological role, catalyzes the conversion of glucosamine-6-phosphate to glucosamine-1-phosphate. This Erwinia tasmaniensis (strain DSM 17950 / CFBP 7177 / CIP 109463 / NCPPB 4357 / Et1/99) protein is Phosphoglucosamine mutase.